Consider the following 643-residue polypeptide: Threonine--tRNA ligase (643 aa).

Residues 1 to 61 (MIKVTLKDGS…KEDVSLSICT (61 aa)) enclose the TGS domain. Positions 240–540 (DHNKLGRELK…LIEKYAGAFP (301 aa)) are catalytic. Residues Cys335, His386, and His517 each coordinate Zn(2+).

Belongs to the class-II aminoacyl-tRNA synthetase family. Homodimer. It depends on Zn(2+) as a cofactor.

The protein localises to the cytoplasm. The enzyme catalyses tRNA(Thr) + L-threonine + ATP = L-threonyl-tRNA(Thr) + AMP + diphosphate + H(+). Its function is as follows. Catalyzes the attachment of threonine to tRNA(Thr) in a two-step reaction: L-threonine is first activated by ATP to form Thr-AMP and then transferred to the acceptor end of tRNA(Thr). Also edits incorrectly charged L-seryl-tRNA(Thr). This is Threonine--tRNA ligase from Clostridium botulinum (strain Eklund 17B / Type B).